The sequence spans 204 residues: LexA repressor (204 aa).

Residues 28 to 48 (RAEIANRLGFKSANAAEEHLK) constitute a DNA-binding region (H-T-H motif). Active-site for autocatalytic cleavage activity residues include Ser121 and Lys158.

Belongs to the peptidase S24 family. Homodimer.

The catalysed reaction is Hydrolysis of Ala-|-Gly bond in repressor LexA.. In terms of biological role, represses a number of genes involved in the response to DNA damage (SOS response), including recA and lexA. In the presence of single-stranded DNA, RecA interacts with LexA causing an autocatalytic cleavage which disrupts the DNA-binding part of LexA, leading to derepression of the SOS regulon and eventually DNA repair. This chain is LexA repressor, found in Shewanella frigidimarina (strain NCIMB 400).